Reading from the N-terminus, the 245-residue chain is Protein DEHYDRATION-INDUCED 19 homolog 4 (245 aa).

It belongs to the Di19 family.

The sequence is that of Protein DEHYDRATION-INDUCED 19 homolog 4 (DI19-4) from Oryza sativa subsp. japonica (Rice).